Reading from the N-terminus, the 353-residue chain is UDP-N-acetylglucosamine--N-acetylmuramyl-(pentapeptide) pyrophosphoryl-undecaprenol N-acetylglucosamine transferase (353 aa).

UDP-N-acetyl-alpha-D-glucosamine is bound by residues 10 to 12 (TGG), Asn124, Ser183, and Gln283.

This sequence belongs to the glycosyltransferase 28 family. MurG subfamily.

Its subcellular location is the cell inner membrane. The enzyme catalyses di-trans,octa-cis-undecaprenyl diphospho-N-acetyl-alpha-D-muramoyl-L-alanyl-D-glutamyl-meso-2,6-diaminopimeloyl-D-alanyl-D-alanine + UDP-N-acetyl-alpha-D-glucosamine = di-trans,octa-cis-undecaprenyl diphospho-[N-acetyl-alpha-D-glucosaminyl-(1-&gt;4)]-N-acetyl-alpha-D-muramoyl-L-alanyl-D-glutamyl-meso-2,6-diaminopimeloyl-D-alanyl-D-alanine + UDP + H(+). It functions in the pathway cell wall biogenesis; peptidoglycan biosynthesis. Functionally, cell wall formation. Catalyzes the transfer of a GlcNAc subunit on undecaprenyl-pyrophosphoryl-MurNAc-pentapeptide (lipid intermediate I) to form undecaprenyl-pyrophosphoryl-MurNAc-(pentapeptide)GlcNAc (lipid intermediate II). The protein is UDP-N-acetylglucosamine--N-acetylmuramyl-(pentapeptide) pyrophosphoryl-undecaprenol N-acetylglucosamine transferase of Helicobacter pylori (strain HPAG1).